The chain runs to 422 residues: Transcription termination factor Rho 1 (422 aa).

The region spanning 49-124 is the Rho RNA-BD domain; that stretch reads AAIGGGVVEI…VKAHSINFTD (76 aa). ATP-binding positions include 173-178, 185-190, and Arg-216; these read GKGQRA and RAGKTI.

Belongs to the Rho family. In terms of assembly, homohexamer. The homohexamer assembles into an open ring structure.

Facilitates transcription termination by a mechanism that involves Rho binding to the nascent RNA, activation of Rho's RNA-dependent ATPase activity, and release of the mRNA from the DNA template. The polypeptide is Transcription termination factor Rho 1 (Ehrlichia chaffeensis (strain ATCC CRL-10679 / Arkansas)).